A 510-amino-acid chain; its full sequence is Gelatinase (510 aa).

Residues 1-30 form the signal peptide; it reads MMKGNKILYILGTGIFVGSSCLFSSLFVAA. Residues 31–192 constitute a propeptide that is removed on maturation; that stretch reads EEQVYSESEV…IMEKQDLTEH (162 aa). Aspartate 324 is a binding site for Ca(2+). Residue histidine 328 coordinates Zn(2+). The active site involves glutamate 329. Histidine 332 and glutamate 352 together coordinate Zn(2+). A Ca(2+)-binding site is contributed by serine 376. Histidine 419 acts as the Proton donor in catalysis.

It belongs to the peptidase M4 family.

The protein resides in the secreted. The enzyme catalyses Preferential cleavage: Xaa-|-Leu, Xaa-|-Phe, Xaa-|-Tyr, Xaa-|-Ala.. Its activity is regulated as follows. Inhibited by L-leucine hydroxamate and phosphoramidon. Not inhibited by phenylmethanesulfonyl fluoride. Reversibly inactivated by straight-chain aliphatic alcohols. Functionally, metalloprotease capable of the hydrolysis of insoluble hydrophobic substrates. Hydrolyzes azocoll and gelatin and, at a lower rate, soluble and insoluble collagens. Does not cleave short synthetic peptides. Preferentially hydrolyzes the 24-Phe-|-Phe-25 bond in the insulin B-chain, followed by the 5-His-|-Leu-6 bond. Inactivates endothelin-1, primarily by cleavage of the 5-Ser-|-Leu-6 and 16-His-|-Leu-17 bonds. Hydrolyzes the alpha chain of C3 to generate a C3b-like protein. Inhibits complement-mediated hemolysis and opsinization of bacteria. Hydrolyzes the insect antimicrobial peptide cecropin. Decreases the length of E.faecalis chains via the activation of autolysin. Degrades polymerized fibrin. The chain is Gelatinase from Enterococcus faecalis (strain ATCC 700802 / V583).